The sequence spans 192 residues: Ion-translocating oxidoreductase complex subunit B (192 aa).

Positions 1 to 26 are hydrophobic; sequence MNAIWIAVAAVSLLGLAFGAILGYAS. The region spanning 32-91 is the 4Fe-4S domain; sequence EDDPVVEKIDEILPQSQCGQCGYPGCRPYAEAISCNGEKINRCAPGGEAVMLKIAELLNV. [4Fe-4S] cluster is bound by residues Cys49, Cys52, Cys57, Cys74, Cys117, Cys120, Cys123, Cys127, Cys147, Cys150, Cys153, and Cys157. 2 4Fe-4S ferredoxin-type domains span residues 108–137 and 138–167; these read MVAV…GATR and AMHT…LQPV.

Belongs to the 4Fe4S bacterial-type ferredoxin family. RnfB subfamily. As to quaternary structure, the complex is composed of six subunits: RsxA, RsxB, RsxC, RsxD, RsxE and RsxG. [4Fe-4S] cluster serves as cofactor.

Its subcellular location is the cell inner membrane. In terms of biological role, part of a membrane-bound complex that couples electron transfer with translocation of ions across the membrane. Required to maintain the reduced state of SoxR. This Escherichia coli O127:H6 (strain E2348/69 / EPEC) protein is Ion-translocating oxidoreductase complex subunit B.